Here is a 421-residue protein sequence, read N- to C-terminus: 3-hydroxy-3-methylglutaryl-coenzyme A reductase (421 aa).

Catalysis depends on charge relay system residues E109, K240, and D315. H410 functions as the Proton donor in the catalytic mechanism.

Belongs to the HMG-CoA reductase family.

It carries out the reaction (R)-mevalonate + 2 NADP(+) + CoA = (3S)-3-hydroxy-3-methylglutaryl-CoA + 2 NADPH + 2 H(+). The protein operates within metabolic intermediate biosynthesis; (R)-mevalonate biosynthesis; (R)-mevalonate from acetyl-CoA: step 3/3. Converts HMG-CoA to mevalonate. This Aeropyrum pernix (strain ATCC 700893 / DSM 11879 / JCM 9820 / NBRC 100138 / K1) protein is 3-hydroxy-3-methylglutaryl-coenzyme A reductase (hmgA).